Here is a 218-residue protein sequence, read N- to C-terminus: Small ribosomal subunit protein uS3c (218 aa).

The KH type-2 domain maps to 47-118 (VQKNIRISSG…KLNIAITRIT (72 aa)).

Belongs to the universal ribosomal protein uS3 family. Part of the 30S ribosomal subunit.

It localises to the plastid. Its subcellular location is the chloroplast. The polypeptide is Small ribosomal subunit protein uS3c (rps3) (Vitis vinifera (Grape)).